A 579-amino-acid polypeptide reads, in one-letter code: Thiol:disulfide interchange protein DsbD (579 aa).

A signal peptide spans 1-16; sequence MKKLFLFFTLIFTAFA. 2 cysteine pairs are disulfide-bonded: cysteine 124–cysteine 129 and cysteine 193–cysteine 315. 8 helical membrane passes run 178–198, 230–250, 254–274, 296–316, 337–357, 376–396, 397–417, and 420–440; these read IFGF…LPML, LTYT…QIAL, YVMI…FGLF, GAFG…SPCT, AATL…ITLF, FGFV…PEVW, EPRL…LQMS, and GFGY…VQPL. The 131-residue stretch at 449–579 folds into the Thioredoxin domain; sequence TTTQSAVENK…AFSNWLKALH (131 aa). Cysteine 495 and cysteine 498 are disulfide-bonded.

Belongs to the thioredoxin family. DsbD subfamily.

It is found in the cell inner membrane. It catalyses the reaction [protein]-dithiol + NAD(+) = [protein]-disulfide + NADH + H(+). The catalysed reaction is [protein]-dithiol + NADP(+) = [protein]-disulfide + NADPH + H(+). Functionally, required to facilitate the formation of correct disulfide bonds in some periplasmic proteins and for the assembly of the periplasmic c-type cytochromes. Acts by transferring electrons from cytoplasmic thioredoxin to the periplasm. This transfer involves a cascade of disulfide bond formation and reduction steps. The sequence is that of Thiol:disulfide interchange protein DsbD from Haemophilus influenzae (strain PittEE).